The following is a 32-amino-acid chain: Unknown protein from spot 206 of 2D-PAGE of etiolated coleoptile (32 aa).

The chain is Unknown protein from spot 206 of 2D-PAGE of etiolated coleoptile from Zea mays (Maize).